The primary structure comprises 143 residues: Transcriptional regulator MraZ (143 aa).

SpoVT-AbrB domains are found at residues 5 to 47 (TYTP…PREE) and 76 to 119 (TDEQ…DAQA).

The protein belongs to the MraZ family. Forms oligomers.

It is found in the cytoplasm. It localises to the nucleoid. The polypeptide is Transcriptional regulator MraZ (Rhodococcus opacus (strain B4)).